The chain runs to 235 residues: Purine nucleoside phosphorylase DeoD-type (235 aa).

H4 is an a purine D-ribonucleoside binding site. Phosphate contacts are provided by residues G20, R24, R43, and 87 to 90 (RVGT). Residues E162, 179 to 181 (EME), and 203 to 204 (SD) contribute to the a purine D-ribonucleoside site. The active-site Proton donor is the D204.

The protein belongs to the PNP/UDP phosphorylase family. As to quaternary structure, homohexamer; trimer of homodimers.

It carries out the reaction a purine D-ribonucleoside + phosphate = a purine nucleobase + alpha-D-ribose 1-phosphate. The catalysed reaction is a purine 2'-deoxy-D-ribonucleoside + phosphate = a purine nucleobase + 2-deoxy-alpha-D-ribose 1-phosphate. Its function is as follows. Catalyzes the reversible phosphorolytic breakdown of the N-glycosidic bond in the beta-(deoxy)ribonucleoside molecules, with the formation of the corresponding free purine bases and pentose-1-phosphate. In Bacillus cereus (strain ATCC 14579 / DSM 31 / CCUG 7414 / JCM 2152 / NBRC 15305 / NCIMB 9373 / NCTC 2599 / NRRL B-3711), this protein is Purine nucleoside phosphorylase DeoD-type.